Consider the following 246-residue polypeptide: Protein phosphatase PhpP (246 aa).

A PPM-type phosphatase domain is found at 2 to 240; it reads EISLLTDVGQ…DNITVALVSM (239 aa). 4 residues coordinate Mn(2+): Asp-36, Gly-37, Asp-192, and Asp-231.

This sequence belongs to the PP2C family. In terms of assembly, interacts with the kinase domain of StkP. The cofactor is Mn(2+).

It localises to the cytoplasm. The catalysed reaction is O-phospho-L-seryl-[protein] + H2O = L-seryl-[protein] + phosphate. It carries out the reaction O-phospho-L-threonyl-[protein] + H2O = L-threonyl-[protein] + phosphate. Phosphatase activity is inhibited by NaF but not by okadaic acid. Functionally, protein phosphatase able to dephosphorylate StkP-P and a phosphothreonine residue in a phosphopeptide synthetic substrate. PhpP and its cognate protein kinase StkP appear to constitute a functional signaling couple in vivo, PhpP's primary role probably being to control phosphorylation levels of StkP and of its targets (which include LocZ, DivIVA and KhpB (also called EloR/Jag)). PhpP thus performs an essential control of StkP activity. Overexpression confers an stkP deletion-like phenotype. The protein is Protein phosphatase PhpP (phpP) of Streptococcus pneumoniae.